Here is a 553-residue protein sequence, read N- to C-terminus: Putative transport protein PM1071 (553 aa).

5 helical membrane passes run 4–24, 28–48, 65–85, 91–111, and 157–177; these read IAIT…IGHW, GVGL…HFTN, FGLI…FFAS, LKLN…VIVI, and MAYA…MWLI. 2 RCK C-terminal domains span residues 190–276 and 277–361; these read KNFL…VLGE and EVDV…ILGN. Transmembrane regions (helical) follow at residues 371-391, 403-425, 439-459, 464-484, 496-516, and 533-553; these read MLPV…PFHI, AGGP…LYWF, IVLF…DTLV, LEWM…VGIV, LCGL…ANAI, and LVMF…WTLL.

The protein belongs to the AAE transporter (TC 2.A.81) family. YidE subfamily.

Its subcellular location is the cell membrane. This Pasteurella multocida (strain Pm70) protein is Putative transport protein PM1071.